Reading from the N-terminus, the 441-residue chain is uncharacterized protein (441 aa).

An N-terminal signal peptide occupies residues 1–23 (MSRKYLLSLLLVGALVISVVASG). Residue C24 is modified to N-acetylcysteine. C24 carries S-archaeol cysteine lipidation.

This sequence belongs to the bacterial solute-binding protein 1 family.

The protein resides in the cell membrane. Its function is as follows. Probably part of a binding-protein-dependent transport system PH1214/15/16. This is an uncharacterized protein from Pyrococcus horikoshii (strain ATCC 700860 / DSM 12428 / JCM 9974 / NBRC 100139 / OT-3).